Consider the following 418-residue polypeptide: Putative ion-transport protein YfeO (418 aa).

Transmembrane regions (helical) follow at residues 10–30 (LLLS…LIVV), 54–74 (DSPF…GLVI), 99–119 (ALPG…SLGP), 120–140 (EHPI…RLLP), 149–169 (ILAS…AALI), 186–206 (LFAP…FFHP), 223–243 (ILSG…AVWC), 258–278 (VLML…AGPV), 300–320 (DYFL…ASGF), 322–342 (GGRI…LHEH), 343–363 (VPAV…VLVV), and 371–391 (LFMA…CIVM).

Belongs to the chloride channel (TC 2.A.49) family.

The protein localises to the cell membrane. In Escherichia coli (strain SMS-3-5 / SECEC), this protein is Putative ion-transport protein YfeO.